The primary structure comprises 485 residues: Glutamyl-tRNA(Gln) amidotransferase subunit A (485 aa).

Catalysis depends on charge relay system residues Lys78 and Ser153. Residue Ser177 is the Acyl-ester intermediate of the active site.

This sequence belongs to the amidase family. GatA subfamily. Heterotrimer of A, B and C subunits.

The catalysed reaction is L-glutamyl-tRNA(Gln) + L-glutamine + ATP + H2O = L-glutaminyl-tRNA(Gln) + L-glutamate + ADP + phosphate + H(+). Its function is as follows. Allows the formation of correctly charged Gln-tRNA(Gln) through the transamidation of misacylated Glu-tRNA(Gln) in organisms which lack glutaminyl-tRNA synthetase. The reaction takes place in the presence of glutamine and ATP through an activated gamma-phospho-Glu-tRNA(Gln). The chain is Glutamyl-tRNA(Gln) amidotransferase subunit A from Bacillus cereus (strain ATCC 14579 / DSM 31 / CCUG 7414 / JCM 2152 / NBRC 15305 / NCIMB 9373 / NCTC 2599 / NRRL B-3711).